A 281-amino-acid chain; its full sequence is NADH-quinone oxidoreductase subunit B (281 aa).

[4Fe-4S] cluster contacts are provided by C37, C38, C103, and C132. Residues 242-281 are disordered; sequence DAKPLDESRAHGPGPTTADIADAADTADSDAAPGATHDTP. The segment covering 257–281 has biased composition (low complexity); the sequence is TTADIADAADTADSDAAPGATHDTP.

This sequence belongs to the complex I 20 kDa subunit family. NDH-1 is composed of 14 different subunits. Subunits NuoB, C, D, E, F, and G constitute the peripheral sector of the complex. It depends on [4Fe-4S] cluster as a cofactor.

It is found in the cell membrane. It catalyses the reaction a quinone + NADH + 5 H(+)(in) = a quinol + NAD(+) + 4 H(+)(out). Functionally, NDH-1 shuttles electrons from NADH, via FMN and iron-sulfur (Fe-S) centers, to quinones in the respiratory chain. The immediate electron acceptor for the enzyme in this species is believed to be a menaquinone. Couples the redox reaction to proton translocation (for every two electrons transferred, four hydrogen ions are translocated across the cytoplasmic membrane), and thus conserves the redox energy in a proton gradient. In Frankia alni (strain DSM 45986 / CECT 9034 / ACN14a), this protein is NADH-quinone oxidoreductase subunit B.